The following is a 418-amino-acid chain: Serine hydroxymethyltransferase (418 aa).

Residues leucine 121 and glycine 125–leucine 127 contribute to the (6S)-5,6,7,8-tetrahydrofolate site. The residue at position 230 (lysine 230) is an N6-(pyridoxal phosphate)lysine. A (6S)-5,6,7,8-tetrahydrofolate-binding site is contributed by serine 355 to phenylalanine 357.

It belongs to the SHMT family. In terms of assembly, homodimer. Pyridoxal 5'-phosphate is required as a cofactor.

It is found in the cytoplasm. It carries out the reaction (6R)-5,10-methylene-5,6,7,8-tetrahydrofolate + glycine + H2O = (6S)-5,6,7,8-tetrahydrofolate + L-serine. It participates in one-carbon metabolism; tetrahydrofolate interconversion. The protein operates within amino-acid biosynthesis; glycine biosynthesis; glycine from L-serine: step 1/1. Functionally, catalyzes the reversible interconversion of serine and glycine with tetrahydrofolate (THF) serving as the one-carbon carrier. This reaction serves as the major source of one-carbon groups required for the biosynthesis of purines, thymidylate, methionine, and other important biomolecules. Also exhibits THF-independent aldolase activity toward beta-hydroxyamino acids, producing glycine and aldehydes, via a retro-aldol mechanism. The protein is Serine hydroxymethyltransferase of Streptococcus pyogenes serotype M6 (strain ATCC BAA-946 / MGAS10394).